The chain runs to 484 residues: tRNA sulfurtransferase (484 aa).

Residues 61-165 (ILLVELLGRI…NDKMMLIKAR (105 aa)) enclose the THUMP domain. Residues 183 to 184 (LI), Lys265, Gly287, and Gln296 contribute to the ATP site. Residues Cys344 and Cys456 are joined by a disulfide bond. One can recognise a Rhodanese domain in the interval 404–484 (LSANDVILDI…DNVKVLNKIS (81 aa)). The active-site Cysteine persulfide intermediate is the Cys456.

It belongs to the ThiI family.

The protein localises to the cytoplasm. The catalysed reaction is [ThiI sulfur-carrier protein]-S-sulfanyl-L-cysteine + a uridine in tRNA + 2 reduced [2Fe-2S]-[ferredoxin] + ATP + H(+) = [ThiI sulfur-carrier protein]-L-cysteine + a 4-thiouridine in tRNA + 2 oxidized [2Fe-2S]-[ferredoxin] + AMP + diphosphate. The enzyme catalyses [ThiS sulfur-carrier protein]-C-terminal Gly-Gly-AMP + S-sulfanyl-L-cysteinyl-[cysteine desulfurase] + AH2 = [ThiS sulfur-carrier protein]-C-terminal-Gly-aminoethanethioate + L-cysteinyl-[cysteine desulfurase] + A + AMP + 2 H(+). The protein operates within cofactor biosynthesis; thiamine diphosphate biosynthesis. Catalyzes the ATP-dependent transfer of a sulfur to tRNA to produce 4-thiouridine in position 8 of tRNAs, which functions as a near-UV photosensor. Also catalyzes the transfer of sulfur to the sulfur carrier protein ThiS, forming ThiS-thiocarboxylate. This is a step in the synthesis of thiazole, in the thiamine biosynthesis pathway. The sulfur is donated as persulfide by IscS. The sequence is that of tRNA sulfurtransferase from Histophilus somni (strain 129Pt) (Haemophilus somnus).